The following is a 924-amino-acid chain: DNA repair and recombination protein RDH54 (924 aa).

Basic and acidic residues predominate over residues 1–10 (MQIPKYENKP). Disordered regions lie at residues 1 to 21 (MQIP…GSNK) and 155 to 183 (EALS…NDGG). Low complexity predominate over residues 168–178 (TTSTTETVPST). One can recognise a Helicase ATP-binding domain in the interval 299-487 (LENDSDISGC…FTIIDFINPG (189 aa)). Position 346–353 (346–353 (IPLTGLCK)) interacts with ATP. The DEGH box motif lies at 472–475 (NDLN). Lys-615 is covalently cross-linked (Glycyl lysine isopeptide (Lys-Gly) (interchain with G-Cter in ubiquitin)). In terms of domain architecture, Helicase C-terminal spans 631–790 (KLRVLMTLLE…DSEMRNKESS (160 aa)).

This sequence belongs to the SNF2/RAD54 helicase family. As to quaternary structure, interacts with RAD51 and DMC1.

Its subcellular location is the nucleus. The enzyme catalyses ATP + H2O = ADP + phosphate + H(+). Its function is as follows. Involved in the recombinational repair of double-strand breaks (DSB) in DNA during mitosis and meiosis. Has DNA dependent ATPase activity. Promotes D-loop (displacement loop) formation with RAD51 recombinase. Modifies the topology of double-stranded DNA during the D-loop reaction to facilitate the invasion of the homologous duplex molecule by the initiating single-stranded DNA substrate. Required for adaptation from G2/M checkpoint arrest induced by a double strand break, by participating in monitoring the extent of single-stranded DNA produced by resection of DNA ends. This role is distinct from its roles in recombination. Promotes colocalization of RAD51 and DMC1 during meiotic recombination. Involved in crossover interference. This Saccharomyces cerevisiae (strain YJM789) (Baker's yeast) protein is DNA repair and recombination protein RDH54 (RDH54).